Reading from the N-terminus, the 463-residue chain is NADH-quinone oxidoreductase subunit N (463 aa).

14 helical membrane passes run 5–25 (LLYG…LMLL), 34–54 (AGSA…VMQL), 72–92 (FSEI…VYSL), 99–119 (KYWI…DSAG), 120–140 (FISL…LMVL), 154–174 (YLLL…LVYG), 196–216 (LAAS…FPFH), 230–250 (VTAF…VRIL), 259–279 (AVTV…ITAI), 286–303 (KMLA…MFAL), 314–334 (LLYY…CFSI), 356–376 (AILL…PGFL), 393–413 (VAVL…GVVL), and 432–452 (LCWT…FMLL).

This sequence belongs to the complex I subunit 2 family. As to quaternary structure, NDH-1 is composed of 14 different subunits. Subunits NuoA, H, J, K, L, M, N constitute the membrane sector of the complex.

The protein localises to the cell inner membrane. The catalysed reaction is a quinone + NADH + 5 H(+)(in) = a quinol + NAD(+) + 4 H(+)(out). NDH-1 shuttles electrons from NADH, via FMN and iron-sulfur (Fe-S) centers, to quinones in the respiratory chain. The immediate electron acceptor for the enzyme in this species is believed to be ubiquinone. Couples the redox reaction to proton translocation (for every two electrons transferred, four hydrogen ions are translocated across the cytoplasmic membrane), and thus conserves the redox energy in a proton gradient. The protein is NADH-quinone oxidoreductase subunit N of Pelobacter propionicus (strain DSM 2379 / NBRC 103807 / OttBd1).